Reading from the N-terminus, the 95-residue chain is Co-chaperonin GroES (95 aa).

Belongs to the GroES chaperonin family. In terms of assembly, heptamer of 7 subunits arranged in a ring. Interacts with the chaperonin GroEL.

The protein localises to the cytoplasm. Functionally, together with the chaperonin GroEL, plays an essential role in assisting protein folding. The GroEL-GroES system forms a nano-cage that allows encapsulation of the non-native substrate proteins and provides a physical environment optimized to promote and accelerate protein folding. GroES binds to the apical surface of the GroEL ring, thereby capping the opening of the GroEL channel. This is Co-chaperonin GroES from Bordetella petrii (strain ATCC BAA-461 / DSM 12804 / CCUG 43448).